The following is a 55-amino-acid chain: IATQVDCSEHPKPACTLDYRPICGSDSKTYSNKCDFCNAVMDSNGTLTLSHFGKC.

Residues Val5–Cys55 enclose the Kazal-like domain. 3 disulfide bridges follow: Cys7/Cys37, Cys15/Cys34, and Cys23/Cys55. A glycan (N-linked (GlcNAc...) asparagine) is linked at Asn44.

Its subcellular location is the secreted. This Dacelo novaeguineae (Laughing kookaburra) protein is Ovomucoid.